We begin with the raw amino-acid sequence, 404 residues long: Glucose-1-phosphate adenylyltransferase (404 aa).

Residues Tyr-99, Gly-164, 179-180 (EK), and Ser-197 contribute to the alpha-D-glucose 1-phosphate site.

This sequence belongs to the bacterial/plant glucose-1-phosphate adenylyltransferase family.

The catalysed reaction is alpha-D-glucose 1-phosphate + ATP + H(+) = ADP-alpha-D-glucose + diphosphate. It functions in the pathway glycan biosynthesis; glycogen biosynthesis. Functionally, involved in the biosynthesis of ADP-glucose, a building block, required in the biosynthesis of maltose-1-phosphate (M1P) and in the elongation reactions to produce linear alpha-1,4-glucans. Catalyzes the reaction between ATP and alpha-D-glucose 1-phosphate (G1P) to produce pyrophosphate and ADP-Glc. The polypeptide is Glucose-1-phosphate adenylyltransferase (Mycolicibacterium gilvum (strain PYR-GCK) (Mycobacterium gilvum (strain PYR-GCK))).